The primary structure comprises 323 residues: tRNA U34 carboxymethyltransferase (323 aa).

Residues Lys-91, Trp-105, Lys-110, Gly-130, 181-182 (IE), Met-196, Tyr-200, and Arg-315 each bind carboxy-S-adenosyl-L-methionine.

This sequence belongs to the class I-like SAM-binding methyltransferase superfamily. CmoB family. As to quaternary structure, homotetramer.

The enzyme catalyses carboxy-S-adenosyl-L-methionine + 5-hydroxyuridine(34) in tRNA = 5-carboxymethoxyuridine(34) in tRNA + S-adenosyl-L-homocysteine + H(+). Its function is as follows. Catalyzes carboxymethyl transfer from carboxy-S-adenosyl-L-methionine (Cx-SAM) to 5-hydroxyuridine (ho5U) to form 5-carboxymethoxyuridine (cmo5U) at position 34 in tRNAs. The polypeptide is tRNA U34 carboxymethyltransferase (Edwardsiella ictaluri (strain 93-146)).